Here is a 402-residue protein sequence, read N- to C-terminus: Formate-dependent phosphoribosylglycinamide formyltransferase (402 aa).

N(1)-(5-phospho-beta-D-ribosyl)glycinamide contacts are provided by residues 23–24 (EL) and E83. ATP-binding positions include R116, K157, 162 to 167 (SSGKGQ), 197 to 200 (ESQI), and E205. In terms of domain architecture, ATP-grasp spans 121–316 (RLAAEELGLP…EFELHARAIL (196 aa)). The Mg(2+) site is built by E275 and E287. N(1)-(5-phospho-beta-D-ribosyl)glycinamide contacts are provided by residues D294, K363, and 370-371 (RR).

This sequence belongs to the PurK/PurT family. As to quaternary structure, homodimer.

It carries out the reaction N(1)-(5-phospho-beta-D-ribosyl)glycinamide + formate + ATP = N(2)-formyl-N(1)-(5-phospho-beta-D-ribosyl)glycinamide + ADP + phosphate + H(+). It functions in the pathway purine metabolism; IMP biosynthesis via de novo pathway; N(2)-formyl-N(1)-(5-phospho-D-ribosyl)glycinamide from N(1)-(5-phospho-D-ribosyl)glycinamide (formate route): step 1/1. In terms of biological role, involved in the de novo purine biosynthesis. Catalyzes the transfer of formate to 5-phospho-ribosyl-glycinamide (GAR), producing 5-phospho-ribosyl-N-formylglycinamide (FGAR). Formate is provided by PurU via hydrolysis of 10-formyl-tetrahydrofolate. This chain is Formate-dependent phosphoribosylglycinamide formyltransferase, found in Acinetobacter baumannii (strain ATCC 17978 / DSM 105126 / CIP 53.77 / LMG 1025 / NCDC KC755 / 5377).